A 311-amino-acid chain; its full sequence is Methionyl-tRNA formyltransferase (311 aa).

S112–P115 contacts (6S)-5,6,7,8-tetrahydrofolate.

This sequence belongs to the Fmt family.

The enzyme catalyses L-methionyl-tRNA(fMet) + (6R)-10-formyltetrahydrofolate = N-formyl-L-methionyl-tRNA(fMet) + (6S)-5,6,7,8-tetrahydrofolate + H(+). In terms of biological role, attaches a formyl group to the free amino group of methionyl-tRNA(fMet). The formyl group appears to play a dual role in the initiator identity of N-formylmethionyl-tRNA by promoting its recognition by IF2 and preventing the misappropriation of this tRNA by the elongation apparatus. The protein is Methionyl-tRNA formyltransferase of Rhizobium etli (strain ATCC 51251 / DSM 11541 / JCM 21823 / NBRC 15573 / CFN 42).